The chain runs to 448 residues: Protein EVI2B (448 aa).

An N-terminal signal peptide occupies residues 1–21 (MDPKYFILILFCGHLNNTFFS). Residues Asn16 and Asn50 are each glycosylated (N-linked (GlcNAc...) asparagine). At 22-202 (KTETITTEKQ…QTPQKNNYNS (181 aa)) the chain is on the extracellular side. The interval 74-108 (AKVTAGQPTPAVYTSSEKPEAHTSAGQPLAYNTKQ) is disordered. Positions 97-108 (SAGQPLAYNTKQ) are enriched in polar residues. A glycan (N-linked (GlcNAc...) asparagine) is linked at Asn114. A helical transmembrane segment spans residues 203 to 226 (IAAILIGVLLTSMLVAIIIIVLWK). The Cytoplasmic portion of the chain corresponds to 227-448 (CLRKPVLNDQ…SLPPPPAELL (222 aa)). Thr249 carries the post-translational modification Phosphothreonine. Ser268, Ser271, Ser278, and Ser294 each carry phosphoserine. 2 disordered regions span residues 298–372 (IEDS…DSTS) and 427–448 (SIPP…AELL). 2 stretches are compositionally biased toward polar residues: residues 313-333 (VNGT…VSSS) and 350-372 (QESN…DSTS).

Bone marrow, peripheral blood mononuclear cells, fibroblasts and Epstein-Barr virus-transformed lymphoblastoid cell lines. Strongly expressed in granulocytic cells, and weakly on lymphocytes cells.

The protein resides in the membrane. Functionally, required for granulocyte differentiation and functionality of hematopoietic progenitor cells through the control of cell cycle progression and survival of hematopoietic progenitor cells. The polypeptide is Protein EVI2B (Homo sapiens (Human)).